The primary structure comprises 96 residues: Phosphoribosyl-ATP pyrophosphatase (96 aa).

Belongs to the PRA-PH family.

The protein localises to the cytoplasm. The enzyme catalyses 1-(5-phospho-beta-D-ribosyl)-ATP + H2O = 1-(5-phospho-beta-D-ribosyl)-5'-AMP + diphosphate + H(+). It functions in the pathway amino-acid biosynthesis; L-histidine biosynthesis; L-histidine from 5-phospho-alpha-D-ribose 1-diphosphate: step 2/9. The polypeptide is Phosphoribosyl-ATP pyrophosphatase (Methanococcus maripaludis (strain C5 / ATCC BAA-1333)).